A 196-amino-acid polypeptide reads, in one-letter code: GTP cyclohydrolase-2 (196 aa).

49 to 53 (RVHSE) contacts GTP. Positions 54, 65, and 67 each coordinate Zn(2+). GTP-binding positions include Q70, 92–94 (EGR), and T114. Catalysis depends on D126, which acts as the Proton acceptor. The active-site Nucleophile is the R128. GTP is bound by residues T149 and K154.

The protein belongs to the GTP cyclohydrolase II family. Homodimer. It depends on Zn(2+) as a cofactor.

It carries out the reaction GTP + 4 H2O = 2,5-diamino-6-hydroxy-4-(5-phosphoribosylamino)-pyrimidine + formate + 2 phosphate + 3 H(+). It functions in the pathway cofactor biosynthesis; riboflavin biosynthesis; 5-amino-6-(D-ribitylamino)uracil from GTP: step 1/4. Functionally, catalyzes the conversion of GTP to 2,5-diamino-6-ribosylamino-4(3H)-pyrimidinone 5'-phosphate (DARP), formate and pyrophosphate. In Shigella dysenteriae serotype 1 (strain Sd197), this protein is GTP cyclohydrolase-2.